Consider the following 293-residue polypeptide: Acetyl-coenzyme A carboxylase carboxyl transferase subunit beta (293 aa).

One can recognise a CoA carboxyltransferase N-terminal domain in the interval 29 to 293; the sequence is LWSKCPECGQ…GCKPMELTSA (265 aa). Zn(2+) is bound by residues cysteine 33, cysteine 36, cysteine 52, and cysteine 55. The segment at 33-55 adopts a C4-type zinc-finger fold; it reads CPECGQVVYLKDLKLNASVCANC.

Belongs to the AccD/PCCB family. Acetyl-CoA carboxylase is a heterohexamer composed of biotin carboxyl carrier protein (AccB), biotin carboxylase (AccC) and two subunits each of ACCase subunit alpha (AccA) and ACCase subunit beta (AccD). It depends on Zn(2+) as a cofactor.

It localises to the cytoplasm. It carries out the reaction N(6)-carboxybiotinyl-L-lysyl-[protein] + acetyl-CoA = N(6)-biotinyl-L-lysyl-[protein] + malonyl-CoA. It participates in lipid metabolism; malonyl-CoA biosynthesis; malonyl-CoA from acetyl-CoA: step 1/1. Functionally, component of the acetyl coenzyme A carboxylase (ACC) complex. Biotin carboxylase (BC) catalyzes the carboxylation of biotin on its carrier protein (BCCP) and then the CO(2) group is transferred by the transcarboxylase to acetyl-CoA to form malonyl-CoA. The polypeptide is Acetyl-coenzyme A carboxylase carboxyl transferase subunit beta (Synechococcus sp. (strain CC9605)).